The sequence spans 556 residues: Peptide chain release factor 3 (556 aa).

In terms of domain architecture, tr-type G spans 28–297 (QQRRNFAIIS…AFLDYALKPG (270 aa)). GTP is bound by residues 37–44 (SHPDAGKT), 105–109 (DTPGH), and 159–162 (NKMD).

The protein belongs to the TRAFAC class translation factor GTPase superfamily. Classic translation factor GTPase family. PrfC subfamily.

The protein resides in the cytoplasm. In terms of biological role, increases the formation of ribosomal termination complexes and stimulates activities of RF-1 and RF-2. It binds guanine nucleotides and has strong preference for UGA stop codons. It may interact directly with the ribosome. The stimulation of RF-1 and RF-2 is significantly reduced by GTP and GDP, but not by GMP. This Synechococcus sp. (strain ATCC 27144 / PCC 6301 / SAUG 1402/1) (Anacystis nidulans) protein is Peptide chain release factor 3.